The primary structure comprises 391 residues: Phosphoprotein (391 aa).

A phosphothreonine mark is found at T10 and T16. The span at 54 to 65 (QKNIQHPTASHQ) shows a compositional bias: polar residues. Disordered stretches follow at residues 54–98 (QKNI…EPLF) and 145–186 (TSTP…RSGS). A Phosphoserine modification is found at S69. Phosphothreonine is present on residues T91, T150, and T165. S188 is subject to Phosphoserine. Residues 218-245 (ANEIMDLLRGMDARLQHLEQKVDKVLAQ) adopt a coiled-coil conformation. A Phosphothreonine modification is found at T250. S257 is subject to Phosphoserine. Residues T258 and T282 each carry the phosphothreonine modification. S292 and S294 each carry phosphoserine. T298 bears the Phosphothreonine mark. Phosphoserine is present on residues S301 and S374. Positions 343–391 (AGRKVMITKMITDCVANPQMKQAFEQRLAKASTEDALNDIKRDIIRNAI) are interaction with the nucleoprotein. Phosphothreonine is present on T375.

This sequence belongs to the rubulavirus/avulavirus P protein family. Homotetramer. Interacts (via multimerization domain) with polymerase L; this interaction forms the polymerase L-P complex. Interacts (via N-terminus) with N0 (via Ncore); this interaction allows P to chaperon N0 to avoid N polymerization before encapsidation. Interacts (via C-terminus) with N-RNA template; this interaction positions the polymerase on the template for both transcription and replication. Interacts with host RPS6KB1 kinase; this interaction may play a role in the viral replication and transcription.

Its subcellular location is the virion. In terms of biological role, essential cofactor of the RNA polymerase L that plays a central role in the transcription and replication by forming the polymerase complex with RNA polymerase L and recruiting L to the genomic N-RNA template for RNA synthesis. Also plays a central role in the encapsidation of nascent RNA chains by forming the encapsidation complex with the nucleocapsid protein N (N-P complex). Acts as a chaperone for newly synthesized free N protein, so-called N0, allowing encapsidation of nascent RNA chains during replication. The nucleoprotein protein N prevents excessive phosphorylation of P, which leads to down-regulation of viral transcription/ replication. Participates, together with N, in the formation of viral factories (viroplasms), which are large inclusions in the host cytoplasm where replication takes place. This is Phosphoprotein from Mumps virus genotype N (strain L-Zagreb vaccine) (MuV).